A 431-amino-acid polypeptide reads, in one-letter code: Glutamate-1-semialdehyde 2,1-aminomutase (431 aa).

Lysine 265 carries the N6-(pyridoxal phosphate)lysine modification.

Belongs to the class-III pyridoxal-phosphate-dependent aminotransferase family. HemL subfamily. As to quaternary structure, homodimer. It depends on pyridoxal 5'-phosphate as a cofactor.

Its subcellular location is the cytoplasm. It catalyses the reaction (S)-4-amino-5-oxopentanoate = 5-aminolevulinate. It participates in porphyrin-containing compound metabolism; protoporphyrin-IX biosynthesis; 5-aminolevulinate from L-glutamyl-tRNA(Glu): step 2/2. This is Glutamate-1-semialdehyde 2,1-aminomutase from Pseudoalteromonas atlantica (strain T6c / ATCC BAA-1087).